Here is a 366-residue protein sequence, read N- to C-terminus: Chorismate synthase (366 aa).

The NADP(+) site is built by Arg-48 and Arg-54. FMN contacts are provided by residues 125–127 (RSS), 238–239 (NA), Gly-278, 293–297 (KPTSS), and Arg-319.

This sequence belongs to the chorismate synthase family. In terms of assembly, homotetramer. The cofactor is FMNH2.

It carries out the reaction 5-O-(1-carboxyvinyl)-3-phosphoshikimate = chorismate + phosphate. It functions in the pathway metabolic intermediate biosynthesis; chorismate biosynthesis; chorismate from D-erythrose 4-phosphate and phosphoenolpyruvate: step 7/7. Catalyzes the anti-1,4-elimination of the C-3 phosphate and the C-6 proR hydrogen from 5-enolpyruvylshikimate-3-phosphate (EPSP) to yield chorismate, which is the branch point compound that serves as the starting substrate for the three terminal pathways of aromatic amino acid biosynthesis. This reaction introduces a second double bond into the aromatic ring system. In Methylococcus capsulatus (strain ATCC 33009 / NCIMB 11132 / Bath), this protein is Chorismate synthase.